The chain runs to 893 residues: MRSLRRVLLQLVLLAGVAFRGVRFDDAADAAAAAQGSSDLFELPSPSPTLALPGGGDEGASTEIIAAPWPGRHGLFTPPRSTSQPARAVVQPAADFGSQLQFYDNGTIQLVDLLSKLPRWQFSTGPPLSKHITTSKPDLNYVIYLDGSETSDLIEVHNGSGVRLPWKLEEFIAETPYIRDSFVTIGSKVSTTFVVNADSGEIIYKHSLPVALNEVGGPLVEEIPSKLDAARSGTSANIIVVVRTDYSISASDLGEHLFNWTRTSFTANYYARYGHQDMLAQSSCLRGNIPCIRTEGPPIKLYLPDSSSDNAIVLRPVNEVSAVDALEPLLPPKKLPQPAGESNVALDSAQNQTADIALGHFVPADTELTNSVTKFSYRWLFPTFLMLLIMACLVKLADASKYCRQFVIRFLKPFMRDEKLMDPRGKSEGTSKRRKARKKDGLINSTQIFSASDKEGNGTGGSTEAQSNKAHDSTNVELPNGLNGRQIGKLCVYSKEIGKGSNGTVVFEGSYGGREVAVKRLLRSHNDIASKEIENLIASDQDPNIVRMYGFEQDNDFVYISLERCRCSLADLIQLHSVPPFSNTKGTDIELWRQDGLPSAQLLKLMRDVVAGIVHLHSLGIIHRDLKPQNVLISKEGPLRAKLSDMGISKRLQEDMTSVSHHGTGFGSSGWQAPEQLRHGRQTRAIDLFSLGCLIFYCITKGKHPFGEYYERDMKIINNQFDLFIVDHIPEAVHLISQLLDPDPEKRPTAVYVMHHPFFWSPELCLSFLRDTSDRIEKTSETDLIDALEGINVEAFGKNWGEKLDAALLADMGRYRKYSFESTRDLLRLIRNKSGHYREFSDDLKELLGSLPEGFVQYFSSRFPKLLIKVYEVMSEHCKDEEAFSKYFLGSSA.

An N-terminal signal peptide occupies residues 1–19 (MRSLRRVLLQLVLLAGVAF). Over 20–379 (RGVRFDDAAD…NSVTKFSYRW (360 aa)) the chain is Lumenal. Residues asparagine 105, asparagine 158, asparagine 259, and asparagine 351 are each glycosylated (N-linked (GlcNAc...) asparagine). Residues 380–397 (LFPTFLMLLIMACLVKLA) form a helical membrane-spanning segment. Residues 398 to 893 (DASKYCRQFV…FSKYFLGSSA (496 aa)) lie on the Cytoplasmic side of the membrane. Residues 451 to 478 (ASDKEGNGTGGSTEAQSNKAHDSTNVEL) form a disordered region. A Protein kinase domain is found at 491–759 (CVYSKEIGKG…AVYVMHHPFF (269 aa)). ATP contacts are provided by residues 497–505 (IGKGSNGTV) and lysine 519. Residue aspartate 625 is the Proton acceptor of the active site. Residues 762–890 (PELCLSFLRD…EEAFSKYFLG (129 aa)) form the KEN domain.

It belongs to the protein kinase superfamily. Ser/Thr protein kinase family. In terms of assembly, homodimer; disulfide-linked. Dimer formation is driven by hydrophobic interactions within the N-terminal luminal domains and stabilized by disulfide bridges. In terms of processing, autophosphorylated. Expressed in roots, nodes, internodes, leaf sheaths, leaf blades, young ears and mature ears.

The protein resides in the endoplasmic reticulum membrane. The catalysed reaction is L-seryl-[protein] + ATP = O-phospho-L-seryl-[protein] + ADP + H(+). The enzyme catalyses L-threonyl-[protein] + ATP = O-phospho-L-threonyl-[protein] + ADP + H(+). Involved in endoplasmic reticulum (ER) stress response. Senses unfolded proteins in the lumen of the ER via its N-terminal domain which leads to enzyme auto-activation. The active endoribonuclease domain splices bZIP50 mRNA to generate a new C-terminus, converting it into a potent unfolded-protein response (UPR) transcriptional activator, which then induces transcription of UPR target genes, such as luminal-binding protein (BiP) chaperones. The protein is Serine/threonine-protein kinase/endoribonuclease IRE1 of Oryza sativa subsp. japonica (Rice).